The primary structure comprises 295 residues: Guided entry of tail-anchored proteins factor CAMLG (295 aa).

2 disordered regions span residues 1–73 (MEPM…ILNP) and 127–148 (GVELRQRNRGDLTADSAPRGSH). Residues 1–188 (MEPMPSATDG…RTTEEFDSFR (188 aa)) lie on the Cytoplasmic side of the membrane. The segment covering 15–24 (ATPSGLSASQ) has biased composition (polar residues). Ser-53 bears the Phosphoserine mark. The segment covering 127-138 (GVELRQRNRGDL) has biased composition (basic and acidic residues). The chain crosses the membrane as a helical span at residues 189-206 (IFRLVGCALLALVVRAFV). Residues 207–208 (CK) are Lumenal-facing. Cys-207 and Cys-283 form a disulfide bridge. The chain crosses the membrane as a helical span at residues 209 to 227 (YLSIFAPFLTLQLAYMGLY). The Cytoplasmic segment spans residues 228-268 (KYFPKGEKKVKTTVLTAALLLSGIPAEVINRSMDTYSKMGE). Residues 269 to 287 (VFTDLCVYFFTFIFCHEVL) form a helical membrane-spanning segment. The Lumenal portion of the chain corresponds to 288–295 (EYWGPEVP).

In terms of assembly, component of the Golgi to ER traffic (GET) complex, which is composed of GET1/WRB, CAMLG/GET2 and GET3/TRC40. Within the complex, GET1 and CAMLG form a heterotetramer which is stabilized by phosphatidylinositol binding and which binds to the GET3 homodimer. Interacts (via C-terminus) with GET1. Interacts (via N-terminus) with GET3. GET3 shows a higher affinity for CAMLG than for GET1. Interacts (via N-terminus) with TNFRSF13B/TACI (via C-terminus). In terms of tissue distribution, in the central nervous system, expressed in astrocytes, microglia and neurons (at protein level).

It is found in the endoplasmic reticulum membrane. Functionally, required for the post-translational delivery of tail-anchored (TA) proteins to the endoplasmic reticulum. Together with GET1/WRB, acts as a membrane receptor for soluble GET3/TRC40, which recognizes and selectively binds the transmembrane domain of TA proteins in the cytosol. Required for the stability of GET1. Stimulates calcium signaling in T cells through its involvement in elevation of intracellular calcium. Essential for the survival of peripheral follicular B cells. In Rattus norvegicus (Rat), this protein is Guided entry of tail-anchored proteins factor CAMLG.